Consider the following 191-residue polypeptide: ATP-dependent Clp protease proteolytic subunit 1 (191 aa).

Ser-91 acts as the Nucleophile in catalysis. The active site involves His-116.

It belongs to the peptidase S14 family. As to quaternary structure, fourteen ClpP subunits assemble into 2 heptameric rings which stack back to back to give a disk-like structure with a central cavity, resembling the structure of eukaryotic proteasomes.

It is found in the cytoplasm. The catalysed reaction is Hydrolysis of proteins to small peptides in the presence of ATP and magnesium. alpha-casein is the usual test substrate. In the absence of ATP, only oligopeptides shorter than five residues are hydrolyzed (such as succinyl-Leu-Tyr-|-NHMec, and Leu-Tyr-Leu-|-Tyr-Trp, in which cleavage of the -Tyr-|-Leu- and -Tyr-|-Trp bonds also occurs).. Functionally, cleaves peptides in various proteins in a process that requires ATP hydrolysis. Has a chymotrypsin-like activity. Plays a major role in the degradation of misfolded proteins. The chain is ATP-dependent Clp protease proteolytic subunit 1 from Chlamydia caviae (strain ATCC VR-813 / DSM 19441 / 03DC25 / GPIC) (Chlamydophila caviae).